Here is a 300-residue protein sequence, read N- to C-terminus: Solute carrier family 25 member 35 (300 aa).

3 Solcar repeats span residues 1–90 (MDFL…AESR), 100–193 (HSPV…IKDL), and 203–294 (QSWK…LRSF). The next 6 membrane-spanning stretches (helical) occupy residues 38–58 (TYQR…KVDG), 59–79 (LAAL…MNGI), 91–119 (GYLH…GAYL), 169–190 (AVGG…FSSI), 205–225 (WKVA…AMTP), and 277–300 (LGPH…TYAK).

Belongs to the mitochondrial carrier (TC 2.A.29) family.

The protein localises to the mitochondrion inner membrane. It catalyses the reaction a dicarboxylate(in) + sulfate(out) = a dicarboxylate(out) + sulfate(in). Functionally, putative antiporter that exchanges dicarboxylates and sulfur oxoanions across the inner membrane of mitochondria. The chain is Solute carrier family 25 member 35 (Slc25a35) from Mus musculus (Mouse).